The primary structure comprises 706 residues: Probable rhamnogalacturonate lyase B (706 aa).

Residues methionine 1–alanine 19 form the signal peptide. 10 N-linked (GlcNAc...) asparagine glycosylation sites follow: asparagine 27, asparagine 40, asparagine 143, asparagine 239, asparagine 285, asparagine 380, asparagine 495, asparagine 569, asparagine 597, and asparagine 638.

This sequence belongs to the polysaccharide lyase 4 family.

Its subcellular location is the secreted. It carries out the reaction Endotype eliminative cleavage of L-alpha-rhamnopyranosyl-(1-&gt;4)-alpha-D-galactopyranosyluronic acid bonds of rhamnogalacturonan I domains in ramified hairy regions of pectin leaving L-rhamnopyranose at the reducing end and 4-deoxy-4,5-unsaturated D-galactopyranosyluronic acid at the non-reducing end.. Pectinolytic enzymes consist of four classes of enzymes: pectin lyase, polygalacturonase, pectin methylesterase and rhamnogalacturonase. Degrades the rhamnogalacturonan I (RG-I) backbone of pectin. In Aspergillus niger (strain ATCC MYA-4892 / CBS 513.88 / FGSC A1513), this protein is Probable rhamnogalacturonate lyase B (rglB).